The following is a 422-amino-acid chain: MPEVKVPELAESITEGTIAEWLKNVGDSVEKGEAILELETDKVNVEVVSEEAGVLSEQLASEGDTVEVGQAIAVIGEGSGNASKENSNDNTPQQNEETNNKKEETTNKSADNAEVNQTNDYNQQRVNATPSARRYARENGVNLAEVSPKTNDVVRKEDIDKKQQAPASTQTTQQAPAKEEKKYNQYPTKPVIREKMSRRKKTAAKKLLEVSNNTAMLTTFNEVDMTNVMELRKRKKEQFMKDHDGTKLGFMSFFTKASVAALKKYPEVNAEIDGDDMITKQYYDIGVAVSTDDGLLVPFVRDCDKKNFAEIEAEIANLAVKAREKKLGLDDMVNGSFTITNGGIFGSMMSTPIINGNQAAILGMHSIITRPIAIDQDTIENRPMMYIALSYDHRIIDGKEAVGFLKTIKELIENPEDLLLES.

Residues 1 to 76 form the Lipoyl-binding domain; the sequence is MPEVKVPELA…EVGQAIAVIG (76 aa). K42 is subject to N6-lipoyllysine. The segment at 77-184 is disordered; the sequence is EGSGNASKEN…APAKEEKKYN (108 aa). 2 stretches are compositionally biased toward polar residues: residues 80-94 and 114-130; these read GNAS…TPQQ and EVNQ…NATP. A Peripheral subunit-binding (PSBD) domain is found at 127 to 163; the sequence is NATPSARRYARENGVNLAEVSPKTNDVVRKEDIDKKQ. Basic and acidic residues predominate over residues 152 to 163; the sequence is DVVRKEDIDKKQ. Positions 164-176 are enriched in low complexity; it reads QAPASTQTTQQAP. Catalysis depends on residues H393 and D397.

It belongs to the 2-oxoacid dehydrogenase family. In terms of assembly, forms a 24-polypeptide structural core with octahedral symmetry. Part of the 2-oxoglutarate dehydrogenase (OGDH) complex composed of E1 (2-oxoglutarate dehydrogenase), E2 (dihydrolipoamide succinyltransferase) and E3 (dihydrolipoamide dehydrogenase); the complex contains multiple copies of the three enzymatic components (E1, E2 and E3). Requires (R)-lipoate as cofactor.

It catalyses the reaction N(6)-[(R)-dihydrolipoyl]-L-lysyl-[protein] + succinyl-CoA = N(6)-[(R)-S(8)-succinyldihydrolipoyl]-L-lysyl-[protein] + CoA. It functions in the pathway amino-acid degradation; L-lysine degradation via saccharopine pathway; glutaryl-CoA from L-lysine: step 6/6. In terms of biological role, E2 component of the 2-oxoglutarate dehydrogenase (OGDH) complex which catalyzes the second step in the conversion of 2-oxoglutarate to succinyl-CoA and CO(2). In Staphylococcus aureus (strain bovine RF122 / ET3-1), this protein is Dihydrolipoyllysine-residue succinyltransferase component of 2-oxoglutarate dehydrogenase complex (odhB).